Here is an 876-residue protein sequence, read N- to C-terminus: Alanine--tRNA ligase (876 aa).

Residues His-564, His-568, Cys-666, and His-670 each contribute to the Zn(2+) site.

Belongs to the class-II aminoacyl-tRNA synthetase family. Zn(2+) is required as a cofactor.

Its subcellular location is the cytoplasm. It carries out the reaction tRNA(Ala) + L-alanine + ATP = L-alanyl-tRNA(Ala) + AMP + diphosphate. Catalyzes the attachment of alanine to tRNA(Ala) in a two-step reaction: alanine is first activated by ATP to form Ala-AMP and then transferred to the acceptor end of tRNA(Ala). Also edits incorrectly charged Ser-tRNA(Ala) and Gly-tRNA(Ala) via its editing domain. This chain is Alanine--tRNA ligase, found in Porphyromonas gingivalis (strain ATCC BAA-308 / W83).